Consider the following 636-residue polypeptide: Poly(3-hydroxyalkanoate) polymerase subunit PhaC (636 aa).

2 disordered regions span residues 1-38 (MYNKRIKRVLPPEEMVTDSKQESGGQKNGDKTGFDATD) and 129-152 (QGTRGMQGEPLPPEPDTRKDKRFS). Basic and acidic residues predominate over residues 143 to 152 (PDTRKDKRFS). The active site involves cysteine 373.

It belongs to the PHA/PHB synthase family. Type I PhaC subfamily.

The protein resides in the cytoplasm. It carries out the reaction (3R)-3-hydroxybutanoyl-CoA + [(3R)-hydroxybutanoate](n) = [(3R)-hydroxybutanoate](n+1) + CoA. It functions in the pathway biopolymer metabolism; poly-(R)-3-hydroxybutanoate biosynthesis. In terms of biological role, polymerizes D(-)-3-hydroxybutyryl-CoA to create PHB which consists of thousands of hydroxybutyrate molecules linked end to end. PHB serves as an intracellular energy reserve material when cells grow under conditions of nutrient limitation. The polypeptide is Poly(3-hydroxyalkanoate) polymerase subunit PhaC (Rhizobium etli (strain ATCC 51251 / DSM 11541 / JCM 21823 / NBRC 15573 / CFN 42)).